A 1066-amino-acid polypeptide reads, in one-letter code: FHIP family protein GH13096 (1066 aa).

The segment covering 1-15 (MSWLRTSPLRQSLTR) has biased composition (polar residues). Residues 1-33 (MSWLRTSPLRQSLTRNSGGNGSGGSGNSGNASA) form a disordered region. Residues 18-27 (GGNGSGGSGN) are compositionally biased toward gly residues. Ser-512 carries the post-translational modification Phosphoserine. 3 disordered regions span residues 647–688 (SFKW…NSSG), 827–885 (DNSP…RSDN), and 942–1010 (SRGV…FNSE). Residues 658–687 (NDATTTTATSDPDVEHNNSSNHNNSSINSS) are compositionally biased toward low complexity. Ser-829 carries the post-translational modification Phosphoserine. Low complexity predominate over residues 836–856 (HQQQQLQHTTNSTHQQQQAQQ). The span at 950–963 (PRGNTCETSLSTTP) shows a compositional bias: polar residues. Residues 967 to 996 (AQATSASSTNSSIGGSTQTLSATHSSSTLH) show a composition bias toward low complexity. Residues 1001–1010 (GPQTASFNSE) show a composition bias toward polar residues.

Belongs to the FHIP family.

The protein is FHIP family protein GH13096 of Drosophila grimshawi (Hawaiian fruit fly).